The sequence spans 303 residues: Methionyl-tRNA formyltransferase (303 aa).

Residue 110–113 (SLLP) coordinates (6S)-5,6,7,8-tetrahydrofolate.

Belongs to the Fmt family.

It catalyses the reaction L-methionyl-tRNA(fMet) + (6R)-10-formyltetrahydrofolate = N-formyl-L-methionyl-tRNA(fMet) + (6S)-5,6,7,8-tetrahydrofolate + H(+). Attaches a formyl group to the free amino group of methionyl-tRNA(fMet). The formyl group appears to play a dual role in the initiator identity of N-formylmethionyl-tRNA by promoting its recognition by IF2 and preventing the misappropriation of this tRNA by the elongation apparatus. The sequence is that of Methionyl-tRNA formyltransferase from Campylobacter lari (strain RM2100 / D67 / ATCC BAA-1060).